We begin with the raw amino-acid sequence, 79 residues long: Acyl carrier protein (79 aa).

The 76-residue stretch at 2 to 77 (ESIEQRVKKI…QAIDYINSHG (76 aa)) folds into the Carrier domain. An O-(pantetheine 4'-phosphoryl)serine modification is found at Ser-37.

Belongs to the acyl carrier protein (ACP) family. 4'-phosphopantetheine is transferred from CoA to a specific serine of apo-ACP by AcpS. This modification is essential for activity because fatty acids are bound in thioester linkage to the sulfhydryl of the prosthetic group.

It localises to the cytoplasm. The protein operates within lipid metabolism; fatty acid biosynthesis. Its function is as follows. Carrier of the growing fatty acid chain in fatty acid biosynthesis. The sequence is that of Acyl carrier protein from Bordetella avium (strain 197N).